The following is a 444-amino-acid chain: CRAL-TRIO domain-containing protein C3H8.02 (444 aa).

The residue at position 40 (S40) is a Phosphoserine. Position 43 is a phosphothreonine (T43). A Phosphoserine modification is found at S81. Residues 171–330 (DDDFVRQLRI…EFGGPNPWRY (160 aa)) form the CRAL-TRIO domain. T418 is modified (phosphothreonine).

The sequence is that of CRAL-TRIO domain-containing protein C3H8.02 from Schizosaccharomyces pombe (strain 972 / ATCC 24843) (Fission yeast).